Here is a 296-residue protein sequence, read N- to C-terminus: Cell division protein DivIB (296 aa).

Residues 1 to 29 (MTKEIPKINNEYLKEKRKKQRIQQRRVQR) are Cytoplasmic-facing. Residues 30–50 (MIVGILVVIVLLILVYMFTPI) form a helical membrane-spanning segment. A POTRA domain is found at 51–119 (SHIKSADIKG…NPIEVNVKEH (69 aa)). At 51-296 (SHIKSADIKG…NKIKDEESSE (246 aa)) the chain is on the extracellular side. Over residues 256 to 273 (NNGQTSSASAKEVQSGTA) the composition is skewed to polar residues. The disordered stretch occupies residues 256 to 296 (NNGQTSSASAKEVQSGTASEDKAKDDLQKALNKIKDEESSE). A compositionally biased stretch (basic and acidic residues) spans 274-296 (SEDKAKDDLQKALNKIKDEESSE).

It belongs to the FtsQ/DivIB family. DivIB subfamily.

The protein localises to the cell membrane. Functionally, cell division protein that may be involved in stabilizing or promoting the assembly of the division complex. The polypeptide is Cell division protein DivIB (Staphylococcus pseudintermedius (strain HKU10-03)).